Reading from the N-terminus, the 393-residue chain is NAD(P)H-quinone oxidoreductase subunit H, chloroplastic (393 aa).

The protein belongs to the complex I 49 kDa subunit family. In terms of assembly, NDH is composed of at least 16 different subunits, 5 of which are encoded in the nucleus.

It localises to the plastid. Its subcellular location is the chloroplast thylakoid membrane. The catalysed reaction is a plastoquinone + NADH + (n+1) H(+)(in) = a plastoquinol + NAD(+) + n H(+)(out). The enzyme catalyses a plastoquinone + NADPH + (n+1) H(+)(in) = a plastoquinol + NADP(+) + n H(+)(out). NDH shuttles electrons from NAD(P)H:plastoquinone, via FMN and iron-sulfur (Fe-S) centers, to quinones in the photosynthetic chain and possibly in a chloroplast respiratory chain. The immediate electron acceptor for the enzyme in this species is believed to be plastoquinone. Couples the redox reaction to proton translocation, and thus conserves the redox energy in a proton gradient. The chain is NAD(P)H-quinone oxidoreductase subunit H, chloroplastic from Cryptomeria japonica (Japanese cedar).